Consider the following 693-residue polypeptide: Elongation factor G (693 aa).

The region spanning 8–282 (EKTRNIGIMA…AVLDYLPSPL (275 aa)) is the tr-type G domain. GTP-binding positions include 17-24 (AHVDAGKT), 81-85 (DTPGH), and 135-138 (NKMD).

Belongs to the TRAFAC class translation factor GTPase superfamily. Classic translation factor GTPase family. EF-G/EF-2 subfamily.

The protein localises to the cytoplasm. Catalyzes the GTP-dependent ribosomal translocation step during translation elongation. During this step, the ribosome changes from the pre-translocational (PRE) to the post-translocational (POST) state as the newly formed A-site-bound peptidyl-tRNA and P-site-bound deacylated tRNA move to the P and E sites, respectively. Catalyzes the coordinated movement of the two tRNA molecules, the mRNA and conformational changes in the ribosome. The protein is Elongation factor G of Enterococcus faecalis (strain ATCC 700802 / V583).